Consider the following 258-residue polypeptide: Small ribosomal subunit protein mS40 (258 aa).

A mitochondrion-targeting transit peptide spans 1–35 (MAASVLNTVLRRLPMLSLFRGSHRVQVPLQTLCTK). Phosphoserine is present on residues S38 and S49. Residues 214 to 258 (SRLRRLYQGHLQEESGPPPESMPKMPPRTPAEASSTGQTGPQSAL) are disordered. A compositionally biased stretch (pro residues) spans 229–242 (GPPPESMPKMPPRT). A compositionally biased stretch (polar residues) spans 245–258 (EASSTGQTGPQSAL).

Belongs to the bacterial ribosomal protein bS18 family. Mitochondrion-specific ribosomal protein mS40 subfamily. In terms of assembly, component of the mitochondrial small ribosomal subunit (mt-SSU). Mature mammalian 55S mitochondrial ribosomes consist of a small (28S) and a large (39S) subunit. The 28S small subunit contains a 12S ribosomal RNA (12S mt-rRNA) and 30 different proteins. The 39S large subunit contains a 16S rRNA (16S mt-rRNA), a copy of mitochondrial valine transfer RNA (mt-tRNA(Val)), which plays an integral structural role, and 52 different proteins. mS40 has a zinc binding site.

Its subcellular location is the mitochondrion. This chain is Small ribosomal subunit protein mS40 (MRPS18B), found in Homo sapiens (Human).